A 307-amino-acid chain; its full sequence is Elongation factor Ts (307 aa).

Positions 80–83 (TDFV) are involved in Mg(2+) ion dislocation from EF-Tu.

The protein belongs to the EF-Ts family.

It is found in the cytoplasm. In terms of biological role, associates with the EF-Tu.GDP complex and induces the exchange of GDP to GTP. It remains bound to the aminoacyl-tRNA.EF-Tu.GTP complex up to the GTP hydrolysis stage on the ribosome. The protein is Elongation factor Ts of Rhizorhabdus wittichii (strain DSM 6014 / CCUG 31198 / JCM 15750 / NBRC 105917 / EY 4224 / RW1) (Sphingomonas wittichii).